We begin with the raw amino-acid sequence, 313 residues long: 4-hydroxy-3-methylbut-2-enyl diphosphate reductase (313 aa).

Cys13 serves as a coordination point for [4Fe-4S] cluster. 2 residues coordinate (2E)-4-hydroxy-3-methylbut-2-enyl diphosphate: His41 and His75. Positions 41 and 75 each coordinate dimethylallyl diphosphate. The isopentenyl diphosphate site is built by His41 and His75. Cys97 serves as a coordination point for [4Fe-4S] cluster. A (2E)-4-hydroxy-3-methylbut-2-enyl diphosphate-binding site is contributed by His125. Dimethylallyl diphosphate is bound at residue His125. An isopentenyl diphosphate-binding site is contributed by His125. The active-site Proton donor is Glu127. (2E)-4-hydroxy-3-methylbut-2-enyl diphosphate is bound at residue Thr168. [4Fe-4S] cluster is bound at residue Cys218. The (2E)-4-hydroxy-3-methylbut-2-enyl diphosphate site is built by Ser246, Ser247, Asn248, and Ser295. Positions 246, 247, 248, and 295 each coordinate dimethylallyl diphosphate. Isopentenyl diphosphate is bound by residues Ser246, Ser247, Asn248, and Ser295.

The protein belongs to the IspH family. [4Fe-4S] cluster is required as a cofactor.

It catalyses the reaction isopentenyl diphosphate + 2 oxidized [2Fe-2S]-[ferredoxin] + H2O = (2E)-4-hydroxy-3-methylbut-2-enyl diphosphate + 2 reduced [2Fe-2S]-[ferredoxin] + 2 H(+). It carries out the reaction dimethylallyl diphosphate + 2 oxidized [2Fe-2S]-[ferredoxin] + H2O = (2E)-4-hydroxy-3-methylbut-2-enyl diphosphate + 2 reduced [2Fe-2S]-[ferredoxin] + 2 H(+). Its pathway is isoprenoid biosynthesis; dimethylallyl diphosphate biosynthesis; dimethylallyl diphosphate from (2E)-4-hydroxy-3-methylbutenyl diphosphate: step 1/1. It participates in isoprenoid biosynthesis; isopentenyl diphosphate biosynthesis via DXP pathway; isopentenyl diphosphate from 1-deoxy-D-xylulose 5-phosphate: step 6/6. Its function is as follows. Catalyzes the conversion of 1-hydroxy-2-methyl-2-(E)-butenyl 4-diphosphate (HMBPP) into a mixture of isopentenyl diphosphate (IPP) and dimethylallyl diphosphate (DMAPP). Acts in the terminal step of the DOXP/MEP pathway for isoprenoid precursor biosynthesis. The chain is 4-hydroxy-3-methylbut-2-enyl diphosphate reductase from Chlorobium phaeovibrioides (strain DSM 265 / 1930) (Prosthecochloris vibrioformis (strain DSM 265)).